The chain runs to 497 residues: Replication factor C large subunit (497 aa).

50 to 57 is a binding site for ATP; sequence GPAGVGKT. Residues 428–455 are compositionally biased toward basic and acidic residues; that stretch reads KRRSLGRDEGKAFFEKKPKKQTPDKKQM. The disordered stretch occupies residues 428 to 497; sequence KRRSLGRDEG…AKPQKTLFDF (70 aa). A compositionally biased stretch (polar residues) spans 456–465; sequence DLTQIINSTP. Basic and acidic residues predominate over residues 466 to 476; the sequence is QEDKVEKKETE.

This sequence belongs to the activator 1 small subunits family. RfcL subfamily. In terms of assembly, heteromultimer composed of small subunits (RfcS) and large subunits (RfcL).

In terms of biological role, part of the RFC clamp loader complex which loads the PCNA sliding clamp onto DNA. This is Replication factor C large subunit from Methanococcoides burtonii (strain DSM 6242 / NBRC 107633 / OCM 468 / ACE-M).